The chain runs to 452 residues: Xaa-Pro dipeptidase 1 (452 aa).

Mn(2+) contacts are provided by D247, D258, H338, E383, and E422.

It belongs to the peptidase M24B family. Bacterial-type prolidase subfamily. Mn(2+) is required as a cofactor.

The catalysed reaction is Xaa-L-Pro dipeptide + H2O = an L-alpha-amino acid + L-proline. In terms of biological role, splits dipeptides with a prolyl residue in the C-terminal position. This chain is Xaa-Pro dipeptidase 1, found in Idiomarina loihiensis (strain ATCC BAA-735 / DSM 15497 / L2-TR).